We begin with the raw amino-acid sequence, 875 residues long: Pyrogallol hydroxytransferase large subunit (875 aa).

The interval 82–104 (RKSFDPNGERNPQLRGAGLSKQD) is disordered. Ser-175 provides a ligand contact to Mo-bis(molybdopterin guanine dinucleotide).

Belongs to the prokaryotic molybdopterin-containing oxidoreductase family. Heterodimer of a large and a small subunit. Mo-bis(molybdopterin guanine dinucleotide) is required as a cofactor.

The catalysed reaction is 1,2,3,5-tetrahydroxybenzene + 1,2,3-trihydroxybenzene = 1,2,3,5-tetrahydroxybenzene + 1,3,5-trihydroxybenzene. In terms of biological role, isomerization of pyrogallol to phloroglucin. The sequence is that of Pyrogallol hydroxytransferase large subunit (athL) from Pelobacter acidigallici.